The primary structure comprises 661 residues: Kyphoscoliosis peptidase (661 aa).

Over residues 28-41 (GTLSDQQANPSSLL) the composition is skewed to polar residues. Disordered stretches follow at residues 28–47 (GTLS…GGGF) and 115–136 (QGDK…HAYP). Active-site residues include Cys-225, His-267, and Asp-282.

Belongs to the transglutaminase-like superfamily. In terms of assembly, interacts with IGFN1 and FLNC. In terms of tissue distribution, highly expressed in skeletal muscle.

Its subcellular location is the cytoplasm. The protein localises to the cytoskeleton. It is found in the myofibril. The protein resides in the sarcomere. It localises to the z line. Functionally, probable cytoskeleton-associated protease required for normal muscle growth. Involved in function, maturation and stabilization of the neuromuscular junction. May act by cleaving muscle-specific proteins such as FLNC. The polypeptide is Kyphoscoliosis peptidase (Homo sapiens (Human)).